The sequence spans 708 residues: Leukotoxin translocation ATP-binding protein LktB (708 aa).

The 126-residue stretch at 1–126 (MEANHQRNDL…ACYQGQLILV (126 aa)) folds into the Peptidase C39 domain. The region spanning 155–437 (FLETLIVSIF…LAQLWQDFQQ (283 aa)) is the ABC transmembrane type-1 domain. The next 5 membrane-spanning stretches (helical) occupy residues 159–179 (LIVSIFLQIFALITPLFFQVV), 192–212 (LNIITVALAIVIIFEIVLSGL), 270–290 (ALTSVLDLLFSFIFFAVMWYY), 296–316 (LVILGSLPCYILWSIFISPIL), and 389–409 (VMVINLWLGAHLVISGDLSIG). The ABC transporter domain occupies 469 to 704 (ISFKNIRFRY…SNGLYSYLHQ (236 aa)). 503 to 510 (GRSGSGKS) serves as a coordination point for ATP.

It belongs to the ABC transporter superfamily. Protein-1 exporter (TC 3.A.1.109) family. Homodimer.

It localises to the cell inner membrane. The enzyme catalyses ATP + H2O + proteinSide 1 = ADP + phosphate + proteinSide 2.. Part of the ABC transporter complex LktBD involved in leukotoxin export. Transmembrane domains (TMD) form a pore in the inner membrane and the ATP-binding domain (NBD) is responsible for energy generation. The chain is Leukotoxin translocation ATP-binding protein LktB (lktB) from Mannheimia haemolytica (Pasteurella haemolytica).